The sequence spans 257 residues: UPF0246 protein lpg1366 (257 aa).

Belongs to the UPF0246 family.

The protein is UPF0246 protein lpg1366 of Legionella pneumophila subsp. pneumophila (strain Philadelphia 1 / ATCC 33152 / DSM 7513).